We begin with the raw amino-acid sequence, 194 residues long: Cation channel sperm-associated auxiliary subunit zeta (194 aa).

As to quaternary structure, component of the CatSper complex or CatSpermasome composed of the core pore-forming members CATSPER1, CATSPER2, CATSPER3 and CATSPER4 as well as auxiliary members CATSPERB, CATSPERG2, CATSPERD, CATSPERE, CATSPERZ, C2CD6/CATSPERT, SLCO6C1, TMEM249, TMEM262 and EFCAB9. HSPA1 may be an additional auxiliary complex member. The core complex members CATSPER1, CATSPER2, CATSPER3 and CATSPER4 form a heterotetrameric channel. The auxiliary CATSPERB, CATSPERG2, CATSPERD and CATSPERE subunits form a pavilion-like structure over the pore which stabilizes the complex through interactions with CATSPER4, CATSPER3, CATSPER1 and CATSPER2 respectively. SLCO6C1 interacts with CATSPERE and TMEM262/CATSPERH interacts with CATSPERB, further stabilizing the complex. C2CD6/CATSPERT interacts at least with CATSPERD and is required for targeting the CatSper complex in the flagellar membrane. Interacts with EFCAB9; the interaction is direct, Ca(2+)-dependent and connects EFCAB9 with the CatSper complex. Dissociates from EFCAB9 at elevated pH. Testis-specific. Expressed in adult but not in fetal testis. Not expressed in ovary. Within testis, expression is restricted to spermatids.

It is found in the cell projection. Its subcellular location is the cilium. It localises to the flagellum membrane. Its function is as follows. Auxiliary component of the CatSper complex, a complex involved in sperm cell hyperactivation. Sperm cell hyperactivation is needed for sperm motility which is essential late in the preparation of sperm for fertilization. Required for a distribution of the CatSper complex in linear quadrilateral nanodomains along the flagellum, maximizing fertilization inside the mammalian female reproductive tract. Together with EFCAB9, associates with the CatSper channel pore and is required for the two-row structure of each single CatSper channel. This chain is Cation channel sperm-associated auxiliary subunit zeta, found in Mus musculus (Mouse).